The sequence spans 270 residues: Ribonuclease HII (270 aa).

The RNase H type-2 domain maps to 84 to 270 (RYIAGVDEVG…HRNSFLTKLL (187 aa)). A divalent metal cation-binding residues include Asp90, Glu91, and Asp186.

Belongs to the RNase HII family. Requires Mn(2+) as cofactor. Mg(2+) serves as cofactor.

The protein resides in the cytoplasm. The enzyme catalyses Endonucleolytic cleavage to 5'-phosphomonoester.. Its function is as follows. Endonuclease that specifically degrades the RNA of RNA-DNA hybrids. The polypeptide is Ribonuclease HII (Clostridium beijerinckii (strain ATCC 51743 / NCIMB 8052) (Clostridium acetobutylicum)).